A 142-amino-acid chain; its full sequence is UPF0179 protein PH1477 (142 aa).

This sequence belongs to the UPF0179 family.

This Pyrococcus horikoshii (strain ATCC 700860 / DSM 12428 / JCM 9974 / NBRC 100139 / OT-3) protein is UPF0179 protein PH1477.